Here is a 323-residue protein sequence, read N- to C-terminus: DNA-directed RNA polymerase subunit alpha 1 (323 aa).

An alpha N-terminal domain (alpha-NTD) region spans residues 1-228; that stretch reads MSNNNSKQEF…EQISVFVSLR (228 aa). The tract at residues 244-323 is alpha C-terminal domain (alpha-CTD); the sequence is IDPILLKPID…DNFRELVEGK (80 aa).

Belongs to the RNA polymerase alpha chain family. As to quaternary structure, homodimer. The RNAP catalytic core consists of 2 alpha, 1 beta, 1 beta' and 1 omega subunit. When a sigma factor is associated with the core the holoenzyme is formed, which can initiate transcription.

It carries out the reaction RNA(n) + a ribonucleoside 5'-triphosphate = RNA(n+1) + diphosphate. DNA-dependent RNA polymerase catalyzes the transcription of DNA into RNA using the four ribonucleoside triphosphates as substrates. The sequence is that of DNA-directed RNA polymerase subunit alpha 1 from Francisella tularensis subsp. novicida (strain U112).